The primary structure comprises 647 residues: 1-deoxy-D-xylulose-5-phosphate synthase (647 aa).

Residues His-88 and 129–131 each bind thiamine diphosphate; that span reads GHA. A Mg(2+)-binding site is contributed by Asp-160. Residues 161–162, Asn-189, Tyr-300, and Glu-377 contribute to the thiamine diphosphate site; that span reads GA. Asn-189 lines the Mg(2+) pocket.

This sequence belongs to the transketolase family. DXPS subfamily. In terms of assembly, homodimer. Mg(2+) serves as cofactor. Thiamine diphosphate is required as a cofactor.

It catalyses the reaction D-glyceraldehyde 3-phosphate + pyruvate + H(+) = 1-deoxy-D-xylulose 5-phosphate + CO2. The protein operates within metabolic intermediate biosynthesis; 1-deoxy-D-xylulose 5-phosphate biosynthesis; 1-deoxy-D-xylulose 5-phosphate from D-glyceraldehyde 3-phosphate and pyruvate: step 1/1. Its function is as follows. Catalyzes the acyloin condensation reaction between C atoms 2 and 3 of pyruvate and glyceraldehyde 3-phosphate to yield 1-deoxy-D-xylulose-5-phosphate (DXP). The polypeptide is 1-deoxy-D-xylulose-5-phosphate synthase (Dehalococcoides mccartyi (strain CBDB1)).